Reading from the N-terminus, the 1469-residue chain is Regulation of nuclear pre-mRNA domain-containing protein 2 (1469 aa).

Residue A2 is modified to N-acetylalanine. S16 carries the post-translational modification Phosphoserine. In terms of domain architecture, CID spans 19 to 149 (SAGALESSLD…ALREALMDRA (131 aa)). Disordered regions lie at residues 329-445 (STLP…TAAP) and 489-524 (TGVS…PSHN). Positions 370–386 (ESDKSATPEPVTDNRDV) are enriched in basic and acidic residues. S374 carries the phosphoserine modification. A Phosphothreonine modification is found at T376. A compositionally biased stretch (acidic residues) spans 387 to 396 (EDMELSDVED). Position 392 is a phosphoserine (S392). Positions 397–412 (DGSKIIVEDRKEKPVE) are enriched in basic and acidic residues. The segment covering 419-430 (GVPTKSTESVSK) has biased composition (polar residues). The segment covering 434–445 (CAPPSVPTTAAP) has biased composition (pro residues). 4 positions are modified to phosphoserine: S492, S495, S498, and S504. The residue at position 536 (T536) is a Phosphothreonine. Positions 572-594 (ASEVTSQSTTASPASTTGSAVKG) are disordered. The span at 576–591 (TSQSTTASPASTTGSA) shows a compositional bias: low complexity. 2 positions are modified to phosphoserine: S583 and S612. T617 carries the post-translational modification Phosphothreonine. S633 bears the Phosphoserine mark. A compositionally biased stretch (polar residues) spans 647 to 656 (SLGFTGTHNP). Disordered regions lie at residues 647–686 (SLGF…TSPS), 716–867 (SSAP…AMMN), 919–1013 (SENC…SGVE), 1033–1140 (KNAS…HGRE), 1154–1183 (SSFD…FKTT), 1204–1328 (FNST…PTPP), and 1368–1414 (GPGL…HRDA). 4 positions are modified to phosphoserine: S682, S684, S735, and S738. T742 is modified (phosphothreonine). Residue S749 is modified to Phosphoserine. Position 751 is a phosphothreonine (T751). Polar residues predominate over residues 761 to 771 (PTSSSVDTMSL). Residues S777 and S781 each carry the phosphoserine modification. Positions 777–787 (SPGSSTPSSTR) are enriched in low complexity. T782 is modified (phosphothreonine). Phosphoserine occurs at positions 788, 836, 845, 919, and 947. The span at 959-982 (PDSNHSGLSQSTAGHLTLPQTQYP) shows a compositional bias: polar residues. S984 and S995 each carry phosphoserine. The span at 1047-1073 (QTPNKGTSSDGVSLSNLTQPSLPTTDQ) shows a compositional bias: polar residues. Phosphoserine occurs at positions 1086 and 1117. Low complexity predominate over residues 1159–1168 (GPSSASELAS). The segment covering 1169 to 1178 (LGGGGSGGLT) has biased composition (gly residues). Over residues 1272 to 1295 (GPPPPPGEHSGVPFPPPPPPPPPG) the composition is skewed to pro residues. R1375 carries the post-translational modification Asymmetric dimethylarginine. 2 stretches are compositionally biased toward low complexity: residues 1377-1390 (SLSL…HLGP) and 1400-1409 (TSSSGLPLSP). R1432 and R1438 each carry asymmetric dimethylarginine.

Associates with the RNA polymerase II complex.

The sequence is that of Regulation of nuclear pre-mRNA domain-containing protein 2 (Rprd2) from Mus musculus (Mouse).